The primary structure comprises 255 residues: Putative glutamine amidotransferase YafJ (255 aa).

C2 serves as the catalytic For GATase activity. Positions 2 to 251 (CELLGMSANV…PGEWRLFCLG (250 aa)) constitute a Glutamine amidotransferase type-2 domain.

This chain is Putative glutamine amidotransferase YafJ (yafJ), found in Escherichia coli (strain K12).